An 802-amino-acid chain; its full sequence is uncharacterized protein (802 aa).

The EF-hand 1 domain maps to 6–41 (SRSEKVKRIFQQFDGNLDGGLSREEMSALVVAVNPR). 7 TPR repeats span residues 229 to 262 (FDGHMAIGKVLYEHQLFKEALVSFKRACELQPTD), 264 to 296 (RPHFKAGNCLYVLGKYKESKDEFLLALEAAESG), 305 to 338 (PQIYVNLGISLEGEGMVLSACEYYREAAILCPTH), 339 to 372 (YRALKLLGSALFGVGEYRAAVKALEEAIYLKPDY), 373 to 406 (ADAHCDLASSLHAMGEDERAIEVFQRAIDLKPGH), 407 to 440 (VDALYNLGGLYMDLGRFQRASEMYTRVLAVWPNH), and 442 to 474 (RAQLNKAVSLLGAGETEEAKRALKEALKMTNRV). An EF-hand 2 domain is found at 595–630 (AIKAINEKILSVLDDSGSGRVDLGMFYAVIAPLCGG).

This is an uncharacterized protein from Arabidopsis thaliana (Mouse-ear cress).